The chain runs to 234 residues: Octanoyltransferase (234 aa).

The 185-residue stretch at 50 to 234 (GEAPELVWLL…AFEQVFGPTR (185 aa)) folds into the BPL/LPL catalytic domain. Residues 88 to 95 (RGGQITYH), 163 to 165 (AIG), and 176 to 178 (GIA) each bind substrate. The active-site Acyl-thioester intermediate is the cysteine 194.

This sequence belongs to the LipB family.

The protein localises to the cytoplasm. The catalysed reaction is octanoyl-[ACP] + L-lysyl-[protein] = N(6)-octanoyl-L-lysyl-[protein] + holo-[ACP] + H(+). It functions in the pathway protein modification; protein lipoylation via endogenous pathway; protein N(6)-(lipoyl)lysine from octanoyl-[acyl-carrier-protein]: step 1/2. In terms of biological role, catalyzes the transfer of endogenously produced octanoic acid from octanoyl-acyl-carrier-protein onto the lipoyl domains of lipoate-dependent enzymes. Lipoyl-ACP can also act as a substrate although octanoyl-ACP is likely to be the physiological substrate. This Rhodopseudomonas palustris (strain BisA53) protein is Octanoyltransferase.